The sequence spans 177 residues: MVQSQGWVRRYFKAFCKGFFVAVPVAVTFLDRVACVARVEGASMQPSLNPGGSQSSDVVLLNHWKVRNFEVQRGDIVSLVSPKNPEQKIIKRVIALEGDIVKTMGHKNRYVKVPRGHIWVEGDHHGHSFDSNSFGPVSLGLLHAHATHILWPPKRWQKLESVLPPERLLVQSEEDCL.

Residues 19–37 traverse the membrane as a helical segment; that stretch reads FFVAVPVAVTFLDRVACVA. Active-site residues include serine 43 and lysine 91.

It belongs to the peptidase S26 family. IMP2 subfamily. As to quaternary structure, heterodimer of 2 subunits, IMMPL1 and IMMPL2.

It is found in the mitochondrion inner membrane. Its function is as follows. Catalyzes the removal of transit peptides required for the targeting of proteins from the mitochondrial matrix, across the inner membrane, into the inter-membrane space. Known to process the nuclear encoded protein DIABLO. This chain is Mitochondrial inner membrane protease subunit 2 (IMMP2L), found in Bos taurus (Bovine).